Reading from the N-terminus, the 234-residue chain is Acetylxylan esterase 2 (234 aa).

The N-terminal stretch at 1-17 (MHSKFFAASLLGLGAAA) is a signal peptide. A propeptide spanning residues 18-27 (IPLEGVMEKR) is cleaved from the precursor. 2 disulfide bridges follow: C29–C106 and C73–C79. The active site involves S117. Disulfide bonds link C128-C188, C174-C206, and C198-C205. The active site involves D202. N207 carries an N-linked (GlcNAc...) asparagine glycan. H214 is an active-site residue.

This sequence belongs to the cutinase family. Acetylxylan esterase subfamily. Monomer.

It is found in the secreted. It carries out the reaction Deacetylation of xylans and xylo-oligosaccharides.. Its pathway is glycan degradation; xylan degradation. Its function is as follows. Degrades acetylated xylans by cleaving acetyl side groups from the hetero-xylan backbone. This Talaromyces purpureogenus (Soft rot fungus) protein is Acetylxylan esterase 2 (axe-2).